Consider the following 191-residue polypeptide: Peptidyl-tRNA hydrolase (191 aa).

Y15 is a tRNA binding site. H20 (proton acceptor) is an active-site residue. Positions 66, 68, and 114 each coordinate tRNA.

The protein belongs to the PTH family. Monomer.

The protein localises to the cytoplasm. The catalysed reaction is an N-acyl-L-alpha-aminoacyl-tRNA + H2O = an N-acyl-L-amino acid + a tRNA + H(+). Functionally, hydrolyzes ribosome-free peptidyl-tRNAs (with 1 or more amino acids incorporated), which drop off the ribosome during protein synthesis, or as a result of ribosome stalling. In terms of biological role, catalyzes the release of premature peptidyl moieties from peptidyl-tRNA molecules trapped in stalled 50S ribosomal subunits, and thus maintains levels of free tRNAs and 50S ribosomes. The polypeptide is Peptidyl-tRNA hydrolase (Streptococcus agalactiae serotype Ia (strain ATCC 27591 / A909 / CDC SS700)).